Consider the following 329-residue polypeptide: 2-oxoglutarate-dependent dioxygenase htyE (329 aa).

Positions 175–289 (NTSELRLLHY…RYSVAYFGKP (115 aa)) constitute a Fe2OG dioxygenase domain. Fe cation-binding residues include His-201, Asp-203, and His-261. Arg-280 contributes to the 2-oxoglutarate binding site.

This sequence belongs to the iron/ascorbate-dependent oxidoreductase family. Fe(2+) is required as a cofactor.

It participates in antifungal biosynthesis. In terms of biological role, 2-oxoglutarate-dependent dioxygenase; part of the gene cluster that mediates the de novo generation of L-homotyrosine from acetyl-CoA and 4-hydroxyphenyl-pyruvate. L-homotyrosine is a building block of echinocandin B, a fungal lipidated cyclic hexapeptide that acts as an antifungal agent. L-homotyrosine 4-hydroxyphenyl-pyruvate first undergoes an aldol-type condensation by htyA with the C-2 of acetyl-CoA followed by the release of CoA to form 2-(4-hydroxybenzyl)-malate. This is followed by isomerization of 2-(4-hydroxy-benzyl)-malate to 3-(4-hydroxybenzyl)-malate by htyD. Thereafter, 3-(4-hydroxybenzyl)-malate undergoes decarboxylation and oxidation to form 2-oxo-4-(4-hydroxybenzyl)butanoic acid, coupled to reduction of NAD(+) to NADH by htyC. The product then undergoes transamination catalyzed by htyB to form L-homotyrosine. This chain is 2-oxoglutarate-dependent dioxygenase htyE, found in Aspergillus rugulosus (Emericella rugulosa).